A 200-amino-acid chain; its full sequence is Holliday junction branch migration complex subunit RuvA (200 aa).

The domain I stretch occupies residues 1–64 (MYAYFRGRLV…EDALQLYGFA (64 aa)). Residues 65–143 (TEEEKQLFRL…KLAPVGSAVA (79 aa)) form a domain II region. The flexible linker stretch occupies residues 144–154 (SVAADRGGFRE). The tract at residues 154–200 (EDAVNALMTLGFPRPVANQAVGCALEPEPDASLEVVIKRALATMHNR) is domain III.

It belongs to the RuvA family. Homotetramer. Forms an RuvA(8)-RuvB(12)-Holliday junction (HJ) complex. HJ DNA is sandwiched between 2 RuvA tetramers; dsDNA enters through RuvA and exits via RuvB. An RuvB hexamer assembles on each DNA strand where it exits the tetramer. Each RuvB hexamer is contacted by two RuvA subunits (via domain III) on 2 adjacent RuvB subunits; this complex drives branch migration. In the full resolvosome a probable DNA-RuvA(4)-RuvB(12)-RuvC(2) complex forms which resolves the HJ.

Its subcellular location is the cytoplasm. Its function is as follows. The RuvA-RuvB-RuvC complex processes Holliday junction (HJ) DNA during genetic recombination and DNA repair, while the RuvA-RuvB complex plays an important role in the rescue of blocked DNA replication forks via replication fork reversal (RFR). RuvA specifically binds to HJ cruciform DNA, conferring on it an open structure. The RuvB hexamer acts as an ATP-dependent pump, pulling dsDNA into and through the RuvAB complex. HJ branch migration allows RuvC to scan DNA until it finds its consensus sequence, where it cleaves and resolves the cruciform DNA. The polypeptide is Holliday junction branch migration complex subunit RuvA (Chlorobium phaeovibrioides (strain DSM 265 / 1930) (Prosthecochloris vibrioformis (strain DSM 265))).